A 389-amino-acid chain; its full sequence is MNKYIIFDNTKLLEYIGKNSLITPCYIYDLELLEDTFLNAKKSLDKNFKNAEIHYAIKANHNPKIVGIAKKYGMGIDCVSGGEIKRALEQKVDSQHIVFARFEIELAIDNDIFAFNSESLEEIQVINQIAQRKNKQVNICLRVNPNIDAQTHHYISTGQFDDKFGIAFVDILNWLKDEYRNFANINIIGLHYHVGSQILNYQVFQSLAITTNEHIKLLRQNDINIKHINFGGGLGIDYQNPQQNPIVDFDGYFARFREFFKYSDELVLHFELGRSLVGQSGVLVSQVLFNKVTQGTHFVIIDAGMTELIRPALYQAQHKIAALIDENINQKQHYHIVGPICESSDVFAKYYQLPKLKRGDLLAIYSAGAYGKVLASEYNLRPSVQEYFI.

Lysine 58 is subject to N6-(pyridoxal phosphate)lysine. Pyridoxal 5'-phosphate is bound by residues glycine 233 and 271–274; that span reads ELGR. Residues arginine 274, arginine 310, tyrosine 314, glutamate 342, and tyrosine 370 each contribute to the substrate site. Pyridoxal 5'-phosphate is bound at residue tyrosine 370.

It belongs to the Orn/Lys/Arg decarboxylase class-II family. LysA subfamily. As to quaternary structure, homodimer. The cofactor is pyridoxal 5'-phosphate.

It catalyses the reaction meso-2,6-diaminopimelate + H(+) = L-lysine + CO2. The protein operates within amino-acid biosynthesis; L-lysine biosynthesis via DAP pathway; L-lysine from DL-2,6-diaminopimelate: step 1/1. In terms of biological role, specifically catalyzes the decarboxylation of meso-diaminopimelate (meso-DAP) to L-lysine. The sequence is that of Diaminopimelate decarboxylase from Francisella tularensis subsp. holarctica (strain LVS).